The following is a 188-amino-acid chain: Large ribosomal subunit protein eL18 (188 aa).

Lys-119 is covalently cross-linked (Glycyl lysine isopeptide (Lys-Gly) (interchain with G-Cter in SUMO2)). Ser-130 is subject to Phosphoserine. Residues 150–188 are disordered; sequence RHFGKAPRTPHSHTKPYVRSKGRKFERARGRWASRGYKN. 2 stretches are compositionally biased toward basic residues: residues 151–171 and 179–188; these read HFGK…RSKG and GRWASRGYKN. Thr-158 bears the Phosphothreonine mark. Residue Lys-164 forms a Glycyl lysine isopeptide (Lys-Gly) (interchain with G-Cter in SUMO2) linkage.

It belongs to the eukaryotic ribosomal protein eL18 family. Component of the large ribosomal subunit.

The protein resides in the cytoplasm. Its subcellular location is the cytosol. The protein localises to the rough endoplasmic reticulum. Its function is as follows. Component of the large ribosomal subunit. The ribosome is a large ribonucleoprotein complex responsible for the synthesis of proteins in the cell. In Oryctolagus cuniculus (Rabbit), this protein is Large ribosomal subunit protein eL18 (RPL18).